The sequence spans 415 residues: D-galactonate dehydratase family member RspA (415 aa).

Substrate-binding residues include N48 and H133. Residue Y170 is the Proton donor/acceptor of the active site. A Mg(2+)-binding site is contributed by D223. Residue H225 is the Proton donor/acceptor of the active site. Residues E249 and E275 each coordinate Mg(2+). Positions 275, 296, 325, 329, and 352 each coordinate substrate.

The protein belongs to the mandelate racemase/muconate lactonizing enzyme family. GalD subfamily. It depends on Mg(2+) as a cofactor.

The catalysed reaction is D-mannonate = 2-dehydro-3-deoxy-D-gluconate + H2O. In terms of biological role, has low D-mannonate dehydratase activity (in vitro), suggesting that this is not a physiological substrate and that it has no significant role in D-mannonate degradation in vivo. Has no detectable activity with a panel of 70 other acid sugars (in vitro). The chain is D-galactonate dehydratase family member RspA (rspA) from Escherichia coli (strain MS 21-1).